The chain runs to 376 residues: PCM7-4 (376 aa).

Its function is as follows. Has antibacterial activity against Listeria monocytogenes. This chain is PCM7-4, found in Bacillus velezensis.